Here is a 626-residue protein sequence, read N- to C-terminus: Chaperone protein HtpG (626 aa).

Residues 1–341 (MIKKEFKAES…SEDLSLNISR (341 aa)) are a; substrate-binding. Positions 342–552 (EMLQHDRQLK…DGDVTIEMEK (211 aa)) are b. The segment at 553–626 (ILSAMPNNQE…FTNDICKLMS (74 aa)) is c.

This sequence belongs to the heat shock protein 90 family. Homodimer.

It localises to the cytoplasm. Its function is as follows. Molecular chaperone. Has ATPase activity. This Alkaliphilus metalliredigens (strain QYMF) protein is Chaperone protein HtpG.